The chain runs to 154 residues: Putative NADPH-dependent 7-cyano-7-deazaguanine reductase (154 aa).

Aspartate 52 serves as the catalytic Proton donor. Substrate contacts are provided by residues 67-69 (VES) and 86-87 (HE).

This sequence belongs to the GTP cyclohydrolase I family. QueF type 1 subfamily.

The protein resides in the cytoplasm. The enzyme catalyses 7-aminomethyl-7-carbaguanine + 2 NADP(+) = 7-cyano-7-deazaguanine + 2 NADPH + 3 H(+). It functions in the pathway tRNA modification; tRNA-queuosine biosynthesis. In terms of biological role, catalyzes the NADPH-dependent reduction of 7-cyano-7-deazaguanine (preQ0) to 7-aminomethyl-7-deazaguanine (preQ1). This is Putative NADPH-dependent 7-cyano-7-deazaguanine reductase from Streptococcus pneumoniae serotype 4 (strain ATCC BAA-334 / TIGR4).